The chain runs to 77 residues: MKEQKWIHEGLITESLPNGMFRVRLDNEDLILGYVSGKIRRSFIRILPGDKVKIEVSRYDSTRGRIIYRLRNKDSKD.

In terms of domain architecture, S1-like spans 1–71 (MKEQKWIHEG…TRGRIIYRLR (71 aa)).

Belongs to the IF-1 family. In terms of assembly, component of the 30S ribosomal translation pre-initiation complex which assembles on the 30S ribosome in the order IF-2 and IF-3, IF-1 and N-formylmethionyl-tRNA(fMet); mRNA recruitment can occur at any time during PIC assembly.

The protein resides in the plastid. The protein localises to the chloroplast. Its function is as follows. One of the essential components for the initiation of protein synthesis. Stabilizes the binding of IF-2 and IF-3 on the 30S subunit to which N-formylmethionyl-tRNA(fMet) subsequently binds. Helps modulate mRNA selection, yielding the 30S pre-initiation complex (PIC). Upon addition of the 50S ribosomal subunit IF-1, IF-2 and IF-3 are released leaving the mature 70S translation initiation complex. This chain is Translation initiation factor IF-1, chloroplastic, found in Antirrhinum majus (Garden snapdragon).